Consider the following 150-residue polypeptide: 3-dehydroquinate dehydratase (150 aa).

Tyr26 acts as the Proton acceptor in catalysis. Substrate-binding residues include Asn77, His83, and Asp90. Catalysis depends on His103, which acts as the Proton donor. Substrate is bound by residues 104–105 (LS) and Arg114.

Belongs to the type-II 3-dehydroquinase family. As to quaternary structure, homododecamer.

The enzyme catalyses 3-dehydroquinate = 3-dehydroshikimate + H2O. Its pathway is metabolic intermediate biosynthesis; chorismate biosynthesis; chorismate from D-erythrose 4-phosphate and phosphoenolpyruvate: step 3/7. In terms of biological role, catalyzes a trans-dehydration via an enolate intermediate. This is 3-dehydroquinate dehydratase from Pectobacterium carotovorum subsp. carotovorum (strain PC1).